We begin with the raw amino-acid sequence, 369 residues long: Pyrimidine monooxygenase RutA (369 aa).

Residues Ile-49–Lys-50, Asn-115, Glu-124, Arg-140–Tyr-141, and Ser-190 contribute to the FMN site.

Belongs to the NtaA/SnaA/DszA monooxygenase family. RutA subfamily.

It carries out the reaction uracil + FMNH2 + NADH + O2 = (Z)-3-ureidoacrylate + FMN + NAD(+) + H2O + H(+). The catalysed reaction is thymine + FMNH2 + NADH + O2 = (Z)-2-methylureidoacrylate + FMN + NAD(+) + H2O + H(+). Catalyzes the pyrimidine ring opening between N-3 and C-4 by an unusual flavin hydroperoxide-catalyzed mechanism, adding oxygen atoms in the process to yield ureidoacrylate peracid, that immediately reacts with FMN forming ureidoacrylate and FMN-N(5)-oxide. The FMN-N(5)-oxide reacts spontaneously with NADH to produce FMN. Requires the flavin reductase RutF to regenerate FMN in vivo. The chain is Pyrimidine monooxygenase RutA from Acinetobacter baylyi (strain ATCC 33305 / BD413 / ADP1).